The chain runs to 154 residues: SsrA-binding protein (154 aa).

It belongs to the SmpB family.

It localises to the cytoplasm. Its function is as follows. Required for rescue of stalled ribosomes mediated by trans-translation. Binds to transfer-messenger RNA (tmRNA), required for stable association of tmRNA with ribosomes. tmRNA and SmpB together mimic tRNA shape, replacing the anticodon stem-loop with SmpB. tmRNA is encoded by the ssrA gene; the 2 termini fold to resemble tRNA(Ala) and it encodes a 'tag peptide', a short internal open reading frame. During trans-translation Ala-aminoacylated tmRNA acts like a tRNA, entering the A-site of stalled ribosomes, displacing the stalled mRNA. The ribosome then switches to translate the ORF on the tmRNA; the nascent peptide is terminated with the 'tag peptide' encoded by the tmRNA and targeted for degradation. The ribosome is freed to recommence translation, which seems to be the essential function of trans-translation. The protein is SsrA-binding protein of Staphylococcus saprophyticus subsp. saprophyticus (strain ATCC 15305 / DSM 20229 / NCIMB 8711 / NCTC 7292 / S-41).